Here is a 524-residue protein sequence, read N- to C-terminus: Alkaline phosphatase, tissue-nonspecific isozyme (524 aa).

The signal sequence occupies residues 1–17 (MISPFLLLAIGTCFASS). Residue aspartate 60 participates in Mg(2+) binding. Zn(2+) is bound by residues aspartate 60 and serine 110. The active-site Phosphoserine intermediate is serine 110. Phosphoserine is present on serine 110. Cysteine 139 and cysteine 201 are disulfide-bonded. Asparagine 140 carries N-linked (GlcNAc...) asparagine glycosylation. Threonine 173 is a Mg(2+) binding site. N-linked (GlcNAc...) asparagine glycosylation occurs at asparagine 230. Glutamate 235 contributes to the Ca(2+) binding site. Asparagine 271 carries N-linked (GlcNAc...) asparagine glycosylation. 2 residues coordinate Ca(2+): phenylalanine 290 and glutamate 291. Asparagine 303 carries N-linked (GlcNAc...) asparagine glycosylation. Ca(2+) is bound at residue aspartate 306. A Mg(2+)-binding site is contributed by glutamate 332. 4 residues coordinate Zn(2+): aspartate 337, histidine 341, aspartate 378, and histidine 379. A glycan (N-linked (GlcNAc...) asparagine) is linked at asparagine 430. Histidine 454 contributes to the Zn(2+) binding site. Cysteine 489 and cysteine 497 are disulfide-bonded. The GPI-anchor amidated serine moiety is linked to residue serine 499. Residues 500–524 (ASSSGSPSPGPLLLLLALLPLGSLF) constitute a propeptide, removed in mature form.

Belongs to the alkaline phosphatase family. Homodimer. The cofactor is Mg(2+). Zn(2+) serves as cofactor. It depends on Ca(2+) as a cofactor. In terms of processing, N-glycosylated.

It is found in the cell membrane. It localises to the extracellular vesicle membrane. Its subcellular location is the mitochondrion membrane. The protein localises to the mitochondrion intermembrane space. The enzyme catalyses a phosphate monoester + H2O = an alcohol + phosphate. It carries out the reaction diphosphate + H2O = 2 phosphate + H(+). It catalyses the reaction pyridoxal 5'-phosphate + H2O = pyridoxal + phosphate. The catalysed reaction is phosphoethanolamine + H2O = ethanolamine + phosphate. The enzyme catalyses N-phosphocreatine + H2O = creatine + phosphate. It carries out the reaction ATP + H2O = ADP + phosphate + H(+). It catalyses the reaction ADP + H2O = AMP + phosphate + H(+). The catalysed reaction is AMP + H2O = adenosine + phosphate. Phosphatase activity is specifically inhibited by 5-((5-chloro-2-methoxyphenyl)sulfonamido)nicotinamide (SBI-425). Its function is as follows. Alkaline phosphatase that metabolizes various phosphate compounds and plays a key role in skeletal mineralization and adaptive thermogenesis. Has broad substrate specificity and can hydrolyze a considerable variety of compounds: however, only a few substrates, such as diphosphate (inorganic pyrophosphate; PPi), pyridoxal 5'-phosphate (PLP) and N-phosphocreatine are natural substrates. Plays an essential role in skeletal and dental mineralization via its ability to hydrolyze extracellular diphosphate, a potent mineralization inhibitor, to phosphate: it thereby promotes hydroxyapatite crystal formation and increases inorganic phosphate concentration. Acts in a non-redundant manner with PHOSPHO1 in skeletal mineralization: while PHOSPHO1 mediates the initiation of hydroxyapatite crystallization in the matrix vesicles (MVs), ALPL/TNAP catalyzes the spread of hydroxyapatite crystallization in the extracellular matrix. Also promotes dephosphorylation of osteopontin (SSP1), an inhibitor of hydroxyapatite crystallization in its phosphorylated state; it is however unclear whether ALPL/TNAP mediates SSP1 dephosphorylation via a direct or indirect manner. Catalyzes dephosphorylation of PLP to pyridoxal (PL), the transportable form of vitamin B6, in order to provide a sufficient amount of PLP in the brain, an essential cofactor for enzymes catalyzing the synthesis of diverse neurotransmitters. Additionally, also able to mediate ATP degradation in a stepwise manner to adenosine, thereby regulating the availability of ligands for purinergic receptors. Also capable of dephosphorylating microbial products, such as lipopolysaccharides (LPS) as well as other phosphorylated small-molecules, such as poly-inosine:cytosine (poly I:C). Acts as a key regulator of adaptive thermogenesis as part of the futile creatine cycle: localizes to the mitochondria of thermogenic fat cells and acts by mediating hydrolysis of N-phosphocreatine to initiate a futile cycle of creatine dephosphorylation and phosphorylation. During the futile creatine cycle, creatine and N-phosphocreatine are in a futile cycle, which dissipates the high energy charge of N-phosphocreatine as heat without performing any mechanical or chemical work. This chain is Alkaline phosphatase, tissue-nonspecific isozyme (ALPL), found in Bos taurus (Bovine).